A 470-amino-acid polypeptide reads, in one-letter code: MSTKIDETITFECETGNYHTFCPISCVSWLYQKIEDSFFLVVGTKTCGYFLQNALGVMIFAEPRYAMAELEEGDISAHLNDYEELKTLCIRIRKDRDPSVIIWIGTCTTEIIKMDLEGMAPKLEYEIGVPILVARANGLDYAFTQGEDTVLAVMAHRCPEQEFPIGESKETKTKTKLFPFPLLKEKKLVEYANHPPLVIFGSLPSNLVSQLDTELRRQFIKVSGWLPAQRYADLPSLGDGVYVCGVNPFLSRTATTLIRRKKCELIVAPFPIGPDGTRAWIERICPVFGIEAQSLEEREERIWESLKDYLDLVRGKSVFFMGDNLLEISLARFLIRCGMIVYEIGIPYMDKRYQAAELALLKDTCIRMCIPIPRIVEKPDNSNQIRRMRELQPDLAITGMAHANPLGARGIGTKWSVEFTFAQIHGFANARDVLELVTRPLRRNENLDNLDRTTLVRNNNEFYTSTPTPR.

The [4Fe-4S] cluster site is built by Cys-22, Cys-47, and Cys-107.

This sequence belongs to the BchN/ChlN family. Protochlorophyllide reductase is composed of three subunits; ChlL, ChlN and ChlB. Forms a heterotetramer of two ChlB and two ChlN subunits. The cofactor is [4Fe-4S] cluster.

It is found in the plastid. The protein localises to the chloroplast. It catalyses the reaction chlorophyllide a + oxidized 2[4Fe-4S]-[ferredoxin] + 2 ADP + 2 phosphate = protochlorophyllide a + reduced 2[4Fe-4S]-[ferredoxin] + 2 ATP + 2 H2O. It functions in the pathway porphyrin-containing compound metabolism; chlorophyll biosynthesis (light-independent). In terms of biological role, component of the dark-operative protochlorophyllide reductase (DPOR) that uses Mg-ATP and reduced ferredoxin to reduce ring D of protochlorophyllide (Pchlide) to form chlorophyllide a (Chlide). This reaction is light-independent. The NB-protein (ChlN-ChlB) is the catalytic component of the complex. This Pinus koraiensis (Korean pine) protein is Light-independent protochlorophyllide reductase subunit N.